Here is a 318-residue protein sequence, read N- to C-terminus: Deoxyhypusine hydroxylase (318 aa).

The Fe cation site is built by His65, Glu66, His98, and Glu99. HEAT-like PBS-type repeat units follow at residues 96–122 (VRHE…YYKE), 194–220 (YRYR…GFKD), 225–251 (FRHE…VLEN), and 258–284 (VRHE…FSKD). Fe cation-binding residues include His227, Glu228, His260, and Glu261.

The protein belongs to the deoxyhypusine hydroxylase family. Fe(2+) serves as cofactor.

It localises to the cytoplasm. It is found in the nucleus. It catalyses the reaction [eIF5A protein]-deoxyhypusine + AH2 + O2 = [eIF5A protein]-hypusine + A + H2O. Its pathway is protein modification; eIF5A hypusination. Functionally, catalyzes the hydroxylation of the N(6)-(4-aminobutyl)-L-lysine intermediate to form hypusine, an essential post-translational modification only found in mature eIF-5A factor. The protein is Deoxyhypusine hydroxylase (lia1) of Schizosaccharomyces pombe (strain 972 / ATCC 24843) (Fission yeast).